We begin with the raw amino-acid sequence, 299 residues long: MERQLEAYCAHLRNERQVSGHTLLAYRRDLEKVIEFCNNQGIAGWDALQVQQLRQLVARQHHHGQSSRSLARLLSAVRGLYRYLNREGLCQHDPANGLAPPKGERRLPKTLDTDRALQLLDGGVDDDFIARRDQAILELFYSSGLRLSELAGLDLEHLDLTGGLVQVLGKGGKSRVLPVGRKACEALQEWFRLRGIAAPRDGAVFITRQGNRLSTRAIQMRVKTFGERELGQHLHPHMLRHSFASHLLESSQDLRAVQEMLGHADISTTQIYTHLDFQHLAAVYDSAHPRAKRSKGNES.

One can recognise a Core-binding (CB) domain in the interval 1-85 (MERQLEAYCA…AVRGLYRYLN (85 aa)). Positions 106 to 285 (RLPKTLDTDR…DFQHLAAVYD (180 aa)) constitute a Tyr recombinase domain. Residues Arg-146, Lys-170, His-237, Arg-240, and His-263 contribute to the active site. Tyr-272 serves as the catalytic O-(3'-phospho-DNA)-tyrosine intermediate.

It belongs to the 'phage' integrase family. XerC subfamily. Forms a cyclic heterotetrameric complex composed of two molecules of XerC and two molecules of XerD.

The protein resides in the cytoplasm. Site-specific tyrosine recombinase, which acts by catalyzing the cutting and rejoining of the recombining DNA molecules. The XerC-XerD complex is essential to convert dimers of the bacterial chromosome into monomers to permit their segregation at cell division. It also contributes to the segregational stability of plasmids. The protein is Tyrosine recombinase XerC of Pseudomonas entomophila (strain L48).